Consider the following 341-residue polypeptide: S-adenosylmethionine:tRNA ribosyltransferase-isomerase (341 aa).

This sequence belongs to the QueA family. Monomer.

It localises to the cytoplasm. It catalyses the reaction 7-aminomethyl-7-carbaguanosine(34) in tRNA + S-adenosyl-L-methionine = epoxyqueuosine(34) in tRNA + adenine + L-methionine + 2 H(+). Its pathway is tRNA modification; tRNA-queuosine biosynthesis. Functionally, transfers and isomerizes the ribose moiety from AdoMet to the 7-aminomethyl group of 7-deazaguanine (preQ1-tRNA) to give epoxyqueuosine (oQ-tRNA). The sequence is that of S-adenosylmethionine:tRNA ribosyltransferase-isomerase from Staphylococcus saprophyticus subsp. saprophyticus (strain ATCC 15305 / DSM 20229 / NCIMB 8711 / NCTC 7292 / S-41).